The primary structure comprises 611 residues: POU domain, class 6, transcription factor 1 (611 aa).

A disordered region spans residues 62–93 (ASQAAGEAGPDNLGSSAEATVKSPPGIPPSPA). In terms of domain architecture, POU-specific spans 449 to 523 (EDGINLEEIR…VLEKWLNEAE (75 aa)). The homeobox DNA-binding region spans 544–603 (KRKRRTSFTPQAIEALNAYFEKNPLPTGQEITEIAKELNYDREVVRVWFCNRRQTLKNTS).

It belongs to the POU transcription factor family. Class-6 subfamily. As to expression, in the embryo, expressed exclusively in the developing brain, whereas in the adult its expression is restricted to brain, heart, skeletal muscle and lung. In the brain, the highest expression levels are found in specific cell layers of the cortex, the olfactory bulb, the hippocampus and the cerebellum.

The protein resides in the nucleus. Transcription factor that binds preferentially to a variant of the octamer motif (5'-ATGATAAT-3'). This chain is POU domain, class 6, transcription factor 1 (POU6F1), found in Homo sapiens (Human).